A 1001-amino-acid chain; its full sequence is Ankyrin repeat domain-containing protein 35 (1001 aa).

ANK repeat units lie at residues Asn53–Ser82, Asp86–Ala115, Glu119–Val148, Asp152–Val181, Asn185–Ala214, and Thr218–Arg247. 3 disordered regions span residues Pro256 to Glu296, Pro352 to Pro482, and Pro559 to Gly601. Over residues Pro281 to Ser295 the composition is skewed to acidic residues. A coiled-coil region spans residues Ser295–Leu344. The segment covering Lys402 to Pro422 has biased composition (basic and acidic residues). Over residues Glu423–Glu434 the composition is skewed to low complexity. The segment covering Thr440–Gln450 has biased composition (polar residues). Over residues Lys579 to Val588 the composition is skewed to basic and acidic residues. Coiled coils occupy residues Lys610–Ser696, Ile733–Leu810, and Gln851–Ile968. The interval Arg879–Ser902 is disordered. Residues Glu890 to Ser902 show a composition bias toward basic and acidic residues.

This is Ankyrin repeat domain-containing protein 35 (ANKRD35) from Homo sapiens (Human).